We begin with the raw amino-acid sequence, 355 residues long: Isocitrate dehydrogenase [NAD] subunit gamma, mitochondrial (355 aa).

Isoleucine 1 is a transit peptide (mitochondrion). Citrate-binding residues include threonine 82 and asparagine 95. Residues arginine 98, arginine 129, and aspartate 216 each contribute to the substrate site. Mn(2+) is bound at residue aspartate 216. Residues asparagine 274, threonine 275, and asparagine 286 each contribute to the ADP site.

This sequence belongs to the isocitrate and isopropylmalate dehydrogenases family. In terms of assembly, heterooligomer of subunits alpha (IDH3A), beta (IDH3B), and gamma (IDH3G) in the apparent ratio of 2:1:1. The heterodimer containing one IDH3A and one IDH3B subunit and the heterodimer containing one IDH3A and one IDH3G subunit assemble into a heterotetramer (which contains two subunits of IDH3A, one of IDH3B and one of IDH3G) and further into the heterooctamer. Mg(2+) is required as a cofactor. It depends on Mn(2+) as a cofactor.

The protein resides in the mitochondrion. The heterotetramer and the heterodimer composed of IDH3A and IDH3G subunits can be allosterically activated by citrate (CIT) or/and ADP, and the two activators can act independently or synergistically. The heterodimer composed of IDH3A and IDH3B subunits cannot be allosterically regulated and the allosteric regulation of the heterotetramer is through the IDH3G subunit and not the IDH3B subunit. The IDH3G subunit contains the allosteric site which consists of a CIT-binding site and an ADP-binding site, and the binding of CIT and ADP causes conformational changes at the allosteric site which are transmitted to the active site in the catalytic subunit (IDH3A) through a cascade of conformational changes at the heterodimer interface, leading to stabilization of the isocitrate-binding at the active site and thus activation of the enzyme. ATP can activate the heterotetramer and the heterodimer composed of IDH3A and IDH3G subunits at low concentrations but inhibits their activities at high concentrations, whereas ATP exhibits only inhibitory effect on the heterodimer composed of IDH3A and IDH3B subunits. Functionally, regulatory subunit which plays a role in the allosteric regulation of the enzyme catalyzing the decarboxylation of isocitrate (ICT) into alpha-ketoglutarate. The heterodimer composed of the alpha (IDH3A) and beta (IDH3B) subunits and the heterodimer composed of the alpha (IDH3A) and gamma (IDH3G) subunits, have considerable basal activity but the full activity of the heterotetramer (containing two subunits of IDH3A, one of IDH3B and one of IDH3G) requires the assembly and cooperative function of both heterodimers. In Macaca fascicularis (Crab-eating macaque), this protein is Isocitrate dehydrogenase [NAD] subunit gamma, mitochondrial (IDH3G).